We begin with the raw amino-acid sequence, 474 residues long: tRNA-2-methylthio-N(6)-dimethylallyladenosine synthase (474 aa).

Residues 3–120 enclose the MTTase N-terminal domain; the sequence is KKLHIKTWGC…LPEMINHVQG (118 aa). [4Fe-4S] cluster contacts are provided by cysteine 12, cysteine 49, cysteine 83, cysteine 157, cysteine 161, and cysteine 164. The Radical SAM core domain maps to 143-375; that stretch reads RAEGPTAFVS…QQRISQQAME (233 aa). The TRAM domain occupies 378-441; the sequence is RKMVGTVQRV…ASSLRGILLR (64 aa).

It belongs to the methylthiotransferase family. MiaB subfamily. In terms of assembly, monomer. [4Fe-4S] cluster serves as cofactor.

Its subcellular location is the cytoplasm. The enzyme catalyses N(6)-dimethylallyladenosine(37) in tRNA + (sulfur carrier)-SH + AH2 + 2 S-adenosyl-L-methionine = 2-methylsulfanyl-N(6)-dimethylallyladenosine(37) in tRNA + (sulfur carrier)-H + 5'-deoxyadenosine + L-methionine + A + S-adenosyl-L-homocysteine + 2 H(+). In terms of biological role, catalyzes the methylthiolation of N6-(dimethylallyl)adenosine (i(6)A), leading to the formation of 2-methylthio-N6-(dimethylallyl)adenosine (ms(2)i(6)A) at position 37 in tRNAs that read codons beginning with uridine. This is tRNA-2-methylthio-N(6)-dimethylallyladenosine synthase from Yersinia pestis bv. Antiqua (strain Antiqua).